Consider the following 216-residue polypeptide: DNA replication complex GINS protein PSF3 (216 aa).

Positions Met1–Glu16 are not essential for folding and stability of GINS complex, but may regulate accessibility to the central complex pore.

This sequence belongs to the GINS3/PSF3 family. In terms of assembly, component of the GINS complex which is a heterotetramer of GINS1, GINS2, GINS3 and GINS4. Forms a stable subcomplex with GINS2. GINS complex interacts with DNA primase in vitro. Component of the CMG helicase complex, a hexameric ring of related MCM2-7 subunits stabilized by CDC45 and the tetrameric GINS complex.

The protein resides in the nucleus. Its subcellular location is the chromosome. Functionally, required for correct functioning of the GINS complex, a complex that plays an essential role in the initiation of DNA replication, and progression of DNA replication forks. GINS complex is a core component of CDC45-MCM-GINS (CMG) helicase, the molecular machine that unwinds template DNA during replication, and around which the replisome is built. The protein is DNA replication complex GINS protein PSF3 (GINS3) of Pongo abelii (Sumatran orangutan).